Consider the following 177-residue polypeptide: UPF0200 protein STK_09500 (177 aa).

11 to 18 (GMPGSGKG) serves as a coordination point for ATP.

The protein belongs to the UPF0200 family.

The protein is UPF0200 protein STK_09500 of Sulfurisphaera tokodaii (strain DSM 16993 / JCM 10545 / NBRC 100140 / 7) (Sulfolobus tokodaii).